Consider the following 437-residue polypeptide: uncharacterized protein (437 aa).

Over residues 63-87 (PSSANVSFQNSDDNLSTSRGRSASP) the composition is skewed to polar residues. Disordered regions lie at residues 63–97 (PSSANVSFQNSDDNLSTSRGRSASPTPIRKFSNFP), 112–147 (VKKDQQTRNQLPPMKRLNSEEEEEQQGKTKTTKKET), and 346–437 (PKNA…YSIW). The segment covering 399 to 409 (EALSPSKSNPD) has biased composition (polar residues). The segment covering 425 to 437 (KKPSSSSSNYSIW) has biased composition (low complexity).

This is an uncharacterized protein from Caenorhabditis elegans.